The primary structure comprises 1213 residues: DNA-directed RNA polymerase subunit beta (1213 aa).

The segment at 1169-1213 is disordered; it reads SRMAEEQEKKKLAEETGKSGDKKENKKDADKPVAPADESDDKVSK. Basic and acidic residues predominate over residues 1171-1199; it reads MAEEQEKKKLAEETGKSGDKKENKKDADK.

This sequence belongs to the RNA polymerase beta chain family. In terms of assembly, the RNAP catalytic core consists of 2 alpha, 1 beta, 1 beta' and 1 omega subunit. When a sigma factor is associated with the core the holoenzyme is formed, which can initiate transcription.

The catalysed reaction is RNA(n) + a ribonucleoside 5'-triphosphate = RNA(n+1) + diphosphate. Its function is as follows. DNA-dependent RNA polymerase catalyzes the transcription of DNA into RNA using the four ribonucleoside triphosphates as substrates. The chain is DNA-directed RNA polymerase subunit beta from Lactobacillus helveticus (strain DPC 4571).